The primary structure comprises 217 residues: Transcriptional regulator NovE (217 aa).

The segment at 1–41 (MVASGRTASKGRGNGATPVRPTAGDATPVDSGQPSDTTYGG) is disordered.

Its function is as follows. Transcription regulator that specifically regulates expression of genes involved in the novobiocin biosynthesis pathway. Probably acts as a positive regulator of transcription. Does not bind DNA. This Streptomyces niveus (Streptomyces spheroides) protein is Transcriptional regulator NovE (novE).